Consider the following 269-residue polypeptide: Phosphate import ATP-binding protein PstB (269 aa).

The ABC transporter domain occupies 14–253 (LSLENVSISY…EFNSTKKIFN (240 aa)). 46–53 (GPSGCGKS) is an ATP binding site.

It belongs to the ABC transporter superfamily. Phosphate importer (TC 3.A.1.7) family. As to quaternary structure, the complex is composed of two ATP-binding proteins (PstB), two transmembrane proteins (PstC and PstA) and a solute-binding protein (PstS).

It is found in the cell inner membrane. It catalyses the reaction phosphate(out) + ATP + H2O = ADP + 2 phosphate(in) + H(+). Functionally, part of the ABC transporter complex PstSACB involved in phosphate import. Responsible for energy coupling to the transport system. This is Phosphate import ATP-binding protein PstB from Prochlorococcus marinus (strain MIT 9312).